A 417-amino-acid polypeptide reads, in one-letter code: Serine hydroxymethyltransferase (417 aa).

(6S)-5,6,7,8-tetrahydrofolate is bound by residues Leu121 and 125–127 (GHL). Lys229 bears the N6-(pyridoxal phosphate)lysine mark. 355–357 (SSF) is a (6S)-5,6,7,8-tetrahydrofolate binding site.

It belongs to the SHMT family. Homodimer. The cofactor is pyridoxal 5'-phosphate.

It localises to the cytoplasm. The catalysed reaction is (6R)-5,10-methylene-5,6,7,8-tetrahydrofolate + glycine + H2O = (6S)-5,6,7,8-tetrahydrofolate + L-serine. It functions in the pathway one-carbon metabolism; tetrahydrofolate interconversion. Its pathway is amino-acid biosynthesis; glycine biosynthesis; glycine from L-serine: step 1/1. Functionally, catalyzes the reversible interconversion of serine and glycine with tetrahydrofolate (THF) serving as the one-carbon carrier. This reaction serves as the major source of one-carbon groups required for the biosynthesis of purines, thymidylate, methionine, and other important biomolecules. Also exhibits THF-independent aldolase activity toward beta-hydroxyamino acids, producing glycine and aldehydes, via a retro-aldol mechanism. The polypeptide is Serine hydroxymethyltransferase (Baumannia cicadellinicola subsp. Homalodisca coagulata).